The sequence spans 291 residues: Protease HtpX homolog (291 aa).

The next 2 helical transmembrane spans lie at 4–24 (VVLFLLTNLAVMLVLSVSARI) and 38–58 (MGMLLVFAALIGFGGSFISLL). His144 provides a ligand contact to Zn(2+). Glu145 is an active-site residue. His148 lines the Zn(2+) pocket. 2 helical membrane passes run 152-172 (GDMVTLTLIQGVVNTFVIFLS) and 199-219 (ISSIAFEIMFGILASVVVMCF). Glu224 is a Zn(2+) binding site.

It belongs to the peptidase M48B family. Zn(2+) serves as cofactor.

It is found in the cell inner membrane. This is Protease HtpX homolog from Chlorobium limicola (strain DSM 245 / NBRC 103803 / 6330).